Reading from the N-terminus, the 137-residue chain is Regulator of cell cycle RGCC (137 aa).

Disordered stretches follow at residues 1–20 (MKPP…APAL) and 57–80 (LERM…SESA). The span at 65 to 80 (SASVSDSSGFSDSESA) shows a compositional bias: low complexity. A phosphoserine mark is found at serine 67, serine 69, serine 71, serine 75, serine 91, and serine 97. Phosphothreonine; by CDK1 is present on threonine 111.

In terms of assembly, interacts with SMAD3. Interacts with CDK1 and PLK1. As to expression, detected in brain, heart and liver (at protein level). Highly expressed in liver, skeletal muscle, kidney and pancreas. Detected at lower levels in heart, brain and placenta. Detected in aorta endothelial cells. Overexpressed in colon, breast, prostate, bladder, lung, and ovarian cancer tissues.

It localises to the cytoplasm. The protein localises to the nucleus. The protein resides in the cytoskeleton. Its subcellular location is the microtubule organizing center. It is found in the centrosome. Its function is as follows. Modulates the activity of cell cycle-specific kinases. Enhances CDK1 activity. May contribute to the regulation of the cell cycle. May inhibit growth of glioma cells by promoting arrest of mitotic progression at the G2/M transition. Fibrogenic factor contributing to the pathogenesis of renal fibrosis through fibroblast activation. The chain is Regulator of cell cycle RGCC (RGCC) from Homo sapiens (Human).